The following is a 441-amino-acid chain: ATP-dependent protease ATPase subunit HslU (441 aa).

ATP is bound by residues I18 and 60-65 (GVGKTE). The tract at residues 131-158 (ILDALLPRPRGSEYDHARDESSTRQTFR) is disordered. Basic and acidic residues predominate over residues 140–152 (RGSEYDHARDESS). ATP-binding residues include D254, E320, and R392.

The protein belongs to the ClpX chaperone family. HslU subfamily. In terms of assembly, a double ring-shaped homohexamer of HslV is capped on each side by a ring-shaped HslU homohexamer. The assembly of the HslU/HslV complex is dependent on binding of ATP.

The protein localises to the cytoplasm. Functionally, ATPase subunit of a proteasome-like degradation complex; this subunit has chaperone activity. The binding of ATP and its subsequent hydrolysis by HslU are essential for unfolding of protein substrates subsequently hydrolyzed by HslV. HslU recognizes the N-terminal part of its protein substrates and unfolds these before they are guided to HslV for hydrolysis. This is ATP-dependent protease ATPase subunit HslU from Chromohalobacter salexigens (strain ATCC BAA-138 / DSM 3043 / CIP 106854 / NCIMB 13768 / 1H11).